A 1123-amino-acid polypeptide reads, in one-letter code: MTPVVHCSVGNISLFHIGSFRPSHEIQIRRFRSTERYSRVPSRRLLQPQRAFNLISIYKRSSWSSARRPRTLSAATVGTDVTVEDPNPPPSGETSEESSEDTAPDTAEASEQAEASTSSIPKAGRNIRKSEMPPLNDEDLVPGASFTGKVRSIKPFGVFVDIGAFTEGLVHISRVSDGFVKDISSLFTVGQEVSVRLVEANKETGRISLTMRTGGDYVKPKTETPKAASGGRNTTATTSRGSPRQTRERDEAKSMGETNYVQGQFLDGVVKNSTRAGSFVTLPDGSEGFLPREEEAVALFTLIGHSALEVGQQVRVKVLNVVRGQVTLTMKEGEDDEEDLASLNTQLKQGWSRGTNAFELAFRRNKEISAFLDQREKIIVPDVQEAAVASVGTELDAEVGIEQSPGKEPETGNAESVAIDSSITEVKETDSIAAVEKDSEISKTESVETASSVVISEDDSTVDGKLVEPTASVSATETEIKEDSSEGSVTTEPTEAASTEFVTAVVEESAPTASSVETSEDDSTVDDKLVEPTASVSATEAESKEDSSEGSVASTESVTAVVEESAPVSSVAIEVPAPEASEASAQEIIEDSTTVEGAADDQTVESDSPPPEGVELSSNGAPDSSIAEDKPDEPEESLIVEEVPVTASSESEDKEPAAVPEEVAASSEKTADVAVAGAEASTATATISPALVKQLREATGAGMMDCKKALAESGGDIEKAQEFLRKKGLAAADKRAGRATAEGRIGSYIHDSRIGVLIEVNCETDFVSRGDIFKELVDDLAMQVAACPQVQYISLDDVPEEVMKKETELEMQREDLLSKPEQIRSKIVEGRVKKRLGEYALLEQPFIKNDKVTISEWVKQTIATIGENMKVNRFVRYNLGEGLEKRSQDFAAEVAAQTAAKAPPAAPPKDDKPEETAETEEKKPAVAISAALVKQLRDETGAGMMDCKKALAETGGDIQQAQEFLRKKGLSSADKKSSRLTAEGLIGAYIHDNRIGCMIEINSETDFVARNEKFKELVNDLAMQVVACPQVEYVSIEDIPESVVIKEKEIEMQREDLQSKPENIREKIVEGRISKRLGVLALLEQPFIKDDSKTVKDLVKETIATLGENIKVRRFTRYTLGEN.

A chloroplast-targeting transit peptide spans 1-73 (MTPVVHCSVG…SSARRPRTLS (73 aa)). A disordered region spans residues 68 to 141 (RPRTLSAATV…MPPLNDEDLV (74 aa)). Residues 94–103 (TSEESSEDTA) are compositionally biased toward acidic residues. Positions 106-119 (TAEASEQAEASTSS) are enriched in low complexity. An S1 motif 1 domain is found at 143–212 (GASFTGKVRS…ETGRISLTMR (70 aa)). The interval 213-258 (TGGDYVKPKTETPKAASGGRNTTATTSRGSPRQTRERDEAKSMGET) is disordered. Polar residues predominate over residues 231–244 (GRNTTATTSRGSPR). Residues 245 to 254 (QTRERDEAKS) show a composition bias toward basic and acidic residues. The S1 motif 2 domain maps to 263–331 (GQFLDGVVKN…VRGQVTLTMK (69 aa)). Disordered stretches follow at residues 443–670 (KTES…SEKT) and 894–923 (VAAQ…EEKK). Residues 486–501 (EGSVTTEPTEAASTEF) show a composition bias toward polar residues. Residues 551–587 (SVASTESVTAVVEESAPVSSVAIEVPAPEASEASAQE) are compositionally biased toward low complexity. Acidic residues predominate over residues 630–639 (KPDEPEESLI). Composition is skewed to low complexity over residues 657–670 (AAVP…SEKT) and 894–903 (VAAQTAAKAP). Residues 908–923 (PKDDKPEETAETEEKK) show a composition bias toward basic and acidic residues.

Belongs to the EF-Ts family. In terms of assembly, component of the chloroplast ribosome 30S and 70S subunits, as well as polysomes. Component of the chloroplast ribosome 70S subunit, and at low levels, present in polysomes. As to quaternary structure, associates transiently with chloroplast polysomes.

Its subcellular location is the plastid. It localises to the chloroplast. Its function is as follows. Associates with the EF-Tu.GDP complex and induces the exchange of GDP to GTP. It remains bound to the aminoacyl-tRNA.EF-Tu.GTP complex up to the GTP hydrolysis stage on the ribosome. Functionally, binds to psbD and psbA 5'-untranslated regions (UTRs) in vitro. This chain is Polyprotein of EF-Ts, chloroplastic, found in Oryza sativa subsp. indica (Rice).